Here is a 283-residue protein sequence, read N- to C-terminus: ATP phosphoribosyltransferase (283 aa).

This sequence belongs to the ATP phosphoribosyltransferase family. Long subfamily. Mg(2+) is required as a cofactor.

The protein resides in the cytoplasm. It carries out the reaction 1-(5-phospho-beta-D-ribosyl)-ATP + diphosphate = 5-phospho-alpha-D-ribose 1-diphosphate + ATP. It participates in amino-acid biosynthesis; L-histidine biosynthesis; L-histidine from 5-phospho-alpha-D-ribose 1-diphosphate: step 1/9. Its activity is regulated as follows. Feedback inhibited by histidine. Catalyzes the condensation of ATP and 5-phosphoribose 1-diphosphate to form N'-(5'-phosphoribosyl)-ATP (PR-ATP). Has a crucial role in the pathway because the rate of histidine biosynthesis seems to be controlled primarily by regulation of HisG enzymatic activity. The polypeptide is ATP phosphoribosyltransferase (Salinibacter ruber (strain DSM 13855 / M31)).